A 430-amino-acid polypeptide reads, in one-letter code: C-terminal-binding protein 1 (430 aa).

The interaction with GLIS2 1 stretch occupies residues 1 to 59 (MSGVRPPIMNGPMHPRPLVALLDGRDCTVEMPILKDVATVAFCDAQSTQEIHEKVLNEA). NAD(+) is bound by residues serine 89, 169–174 (IGLGRV), aspartate 193, 226–232 (CGLNEHN), 253–255 (TAR), and aspartate 279. Arginine 255 is an active-site residue. The interaction with GLIS2 2 stretch occupies residues 277 to 349 (ALDVHESEPF…VNKDHLTAAT (73 aa)). Residue glutamate 284 is part of the active site. Phosphoserine is present on serine 289. The active-site Proton donor is histidine 304. Positions 398–430 (SHGLPPVAHPPHAPSPGQTVKPEADRDHTTDQL) are disordered. Serine 412 is subject to Phosphoserine. Lysine 418 is covalently cross-linked (Glycyl lysine isopeptide (Lys-Gly) (interchain with G-Cter in SUMO)). Residues 419-430 (PEADRDHTTDQL) show a composition bias toward basic and acidic residues.

Belongs to the D-isomer specific 2-hydroxyacid dehydrogenase family. In terms of assembly, homo- or heterodimer. Heterodimer with CTBP2. Interacts with ELK3 (via its PXDLS motif). Interacts with RBBP8 (via its PXDLS motif); the interaction is disrupted by binding to adenovirus E1A. Interacts with PNN, MECOM and ZFHX1B. Interacts with ZNF366 (via PXDLS motif). Interaction with SATB1 (non-acetylated form); the interaction stabilizes its attachment to DNA and promotes transcription repression. Interacts with PRDM16; the interaction represses white adipose tissue (WAT)-specific genes expression. Interacts with GLIS2, HIPK2, FOXP1, FOXP2, HDAC4, HDAC5, HDAC9, NRIP1 and WIZ. Interacts with ZNF217. Interacts with BCL6; the interaction is required for BCL6 transcriptional autoinhibition and inhibition of some BCL6 target genes. Interacts with IKZF4. Interacts with MCRIP1 (unphosphorylated form, via the PXDLS motif); competitively inhibiting CTBP-ZEB1 interaction. Interacts with Bassoon/BSN; this interaction targets and anchors CTBP1 to presynapses. Interacts with SIMC1. NAD(+) is required as a cofactor. In terms of processing, the level of phosphorylation appears to be regulated during the cell cycle. Phosphorylation by HIPK2 on Ser-412 induces proteasomal degradation. ADP-ribosylated; when cells are exposed to brefeldin A. Post-translationally, sumoylation on Lys-418 is promoted by the E3 SUMO-protein ligase CBX4.

Its subcellular location is the cytoplasm. It localises to the nucleus. The protein localises to the synapse. It is found in the synaptosome. In terms of biological role, corepressor targeting diverse transcription regulators such as GLIS2 or BCL6. Has dehydrogenase activity. Involved in controlling the equilibrium between tubular and stacked structures in the Golgi complex. Functions in brown adipose tissue (BAT) differentiation. This is C-terminal-binding protein 1 (Ctbp1) from Rattus norvegicus (Rat).